The chain runs to 52 residues: Dibenzothiophene metabolism operon protein NahQ/DoxH (52 aa).

It functions in the pathway aromatic compound metabolism; naphthalene degradation. In terms of biological role, may be involved in the conversion of 2-hydroxy-4-(2'-oxo-3,5-cyclohexadienyl)-buta-2,4-dienoate to cis-O-hydroxybenzylidenepyruvate. DoxH and DoxJ encode different enzymes that may have interchangeable functions. The chain is Dibenzothiophene metabolism operon protein NahQ/DoxH (nahQ) from Pseudomonas putida (Arthrobacter siderocapsulatus).